A 617-amino-acid polypeptide reads, in one-letter code: Vacuolar protein sorting-associated protein 33A (617 aa).

A disordered region spans residues 268–287 (NFPSDGALPGGGGSGPRVEE).

This sequence belongs to the STXBP/unc-18/SEC1 family. Component of the class C core vacuole/endosome tethering (CORVET) complex composed of at least Vps8, dor/Vps18, car/Vps33A and Vps16A; unlike in other species, Vps11 is not part of the Drosophila complex. Due to the reduced number of components the Drosophila CORVET complex is often referred to as the miniCORVET complex. Interacts with ema. Component of the homotypic fusion and vacuole protein sorting (HOPS) complex, composed of Vps16A, car/Vps33A, dor/Vps18, Vps39, Vps11 and lt/Vps41. The tethering complex core made up of Vps16A, car/Vps33A and dor/Vps18 and shared by both HOPS and CORVET, preferentially associates with CORVET specific Vps8 over HOPS specific lt/Vps41. Interacts with Syx17 (via SNARE domain); the interaction requires Vps16A, may involve additional components of the HOPS complex and may promote assembly of the Syx17-Snap29-Vamp7 trans-SNARE complex.

It is found in the early endosome. The protein localises to the late endosome membrane. Its subcellular location is the lysosome membrane. Its function is as follows. Core component of the class C core vacuole/endosome tethering (CORVET) and the homotypic fusion and vacuole protein sorting (HOPS) tethering complexes involved in endo-lysosomal vesicle trafficking and lysosome biogenesis. The CORVET complex facilitates docking and fusion of endosomal vesicles during endosome maturation, acts upstream of HOPS, but is not involved in autophagic flux. The CORVET complex may cooperate with the early endosomal tether Rbsn-5 to mediate endosomal fusion. The HOPS complex facilitates docking and fusion of lysosomes with late endosomes and several other types of vesicles. The HOPS complex is also involved in autophagy and crinophagy (the elimination of unused secretory granules through their fusion with lysosomes). The HOPS complex probably instigates autophagosome-lysosome fusion by binding autophagosome associated Syx17/syntaxin 17 and promoting assembly of the trans-SNARE complex. Independent of Syx17/syntaxin 17 HOPS is involved in biosynthetic transport to lysosomes and lysosome-related organelles such as eye-pigment granules. Required for endocytic degradation of boss/bride of sevenless and N/Notch in developing ommatidia. The chain is Vacuolar protein sorting-associated protein 33A from Drosophila melanogaster (Fruit fly).